The following is a 799-amino-acid chain: High affinity nerve growth factor receptor (799 aa).

An N-terminal signal peptide occupies residues 1-33 (MLRGQRLGQLGWHRPAAGLGSLMTSLMLACASA). Topologically, residues 34–420 (ASCREVCCPV…VEKKDETPFG (387 aa)) are extracellular. 2 disulfide bridges follow: cysteine 36-cysteine 41 and cysteine 40-cysteine 50. Asparagine 67 carries N-linked (GlcNAc...) asparagine glycosylation. LRR repeat units follow at residues 90-113 (LGEL…AFRF) and 116-137 (RLSH…TVQG). 10 N-linked (GlcNAc...) asparagine glycosylation sites follow: asparagine 121, asparagine 190, asparagine 204, asparagine 255, asparagine 264, asparagine 320, asparagine 325, asparagine 341, asparagine 361, and asparagine 404. Positions 148 to 219 (NPLHCSCALF…GDDVFLQCQV (72 aa)) constitute an LRRCT domain. Cysteine 154 and cysteine 193 are joined by a disulfide. 2 consecutive Ig-like C2-type domains span residues 196–285 (PTVK…VSVS) and 205–368 (DSVE…LAAN). 2 cysteine pairs are disulfide-bonded: cysteine 217–cysteine 267 and cysteine 302–cysteine 348. The helical transmembrane segment at 421 to 441 (VSVAVGLAVSAALFLSALLLV) threads the bilayer. Residues 442-799 (LNKCGQRSKF…APPSYLDVLG (358 aa)) are Cytoplasmic-facing. The segment at 472–493 (MTLGGSSLSPTEGKGSGLQGHI) is interaction with SQSTM1. Tyrosine 499 carries the phosphotyrosine; by autocatalysis modification. A Protein kinase domain is found at 513 to 784 (IILKWELGEG…LSMKDVHARL (272 aa)). ATP-binding positions include 519–527 (LGEGAFGKV) and lysine 547. Residue aspartate 653 is the Proton acceptor of the active site. 4 positions are modified to phosphotyrosine; by autocatalysis: tyrosine 679, tyrosine 683, tyrosine 684, and tyrosine 794.

It belongs to the protein kinase superfamily. Tyr protein kinase family. Insulin receptor subfamily. Exists in a dynamic equilibrium between monomeric (low affinity) and dimeric (high affinity) structures. Homodimerization is induced by binding of a NGF dimer. Found in a complex, at least composed of KIDINS220, MAGI2, NTRK1 and RAPGEF2; the complex is mainly formed at late endosomes in a nerve growth factor (NGF)-dependent manner. Interacts with RAPGEF2; the interaction is strengthened after NGF stimulation. Interacts with SQSTM1; bridges NTRK1 to NGFR. Forms a ternary complex with NGFR and KIDINS220; this complex is affected by the expression levels of KIDINS220 and an increase in KIDINS220 expression leads to a decreased association of NGFR and NTRK1. Interacts (phosphorylated upon activation by NGF) with SHC1; mediates SHC1 phosphorylation and activation. Interacts (phosphorylated upon activation by NGF) with PLCG1; mediates PLCG1 phosphorylation and activation. Interacts (phosphorylated) with SH2B1 and SH2B2. Interacts with GRB2. Interacts with PIK3R1. Interacts with FRS2. Interacts with SORT1; may regulate NTRK1 anterograde axonal transport. Interacts with SH2D1A; regulates NTRK1. Interacts with NRADD. Interacts with RAB7A. Interacts with PTPRS. Interacts with USP36; USP36 does not deubiquitinate NTRK1. Interacts with GGA3. Interacts with TSPAN1; this interaction promotes NTRK1 stability. Ligand-mediated autophosphorylation. Interaction with SQSTM1 is phosphotyrosine-dependent. Autophosphorylation at Tyr-499 mediates interaction and phosphorylation of SHC1. Post-translationally, N-glycosylated. In terms of processing, ubiquitinated. Undergoes polyubiquitination upon activation; regulated by NGFR. Ubiquitination by NEDD4L leads to degradation. Ubiquitination regulates the internalization of the receptor.

The protein resides in the cell membrane. The protein localises to the early endosome membrane. It is found in the late endosome membrane. It localises to the recycling endosome membrane. The enzyme catalyses L-tyrosyl-[protein] + ATP = O-phospho-L-tyrosyl-[protein] + ADP + H(+). Its activity is regulated as follows. The pro-survival signaling effect of NTRK1 in neurons requires its endocytosis into signaling early endosomes and its retrograde axonal transport. This is regulated by different proteins including CFL1, RAC1 and SORT1. NTF3 is unable to induce this signaling probably due to the lability of the NTF3-NTRK1 complex in endosomes. SH2D1A inhibits the autophosphorylation of the receptor, and alters the recruitment and activation of downstream effectors and signaling cascades. Regulated by NGFR. Receptor tyrosine kinase involved in the development and the maturation of the central and peripheral nervous systems through regulation of proliferation, differentiation and survival of sympathetic and nervous neurons. High affinity receptor for NGF which is its primary ligand, it can also bind and be activated by NTF3/neurotrophin-3. However, NTF3 only supports axonal extension through NTRK1 but has no effect on neuron survival. Upon dimeric NGF ligand-binding, undergoes homodimerization, autophosphorylation and activation. Recruits, phosphorylates and/or activates several downstream effectors including SHC1, FRS2, SH2B1, SH2B2 and PLCG1 that regulate distinct overlapping signaling cascades driving cell survival and differentiation. Through SHC1 and FRS2 activates a GRB2-Ras-MAPK cascade that regulates cell differentiation and survival. Through PLCG1 controls NF-Kappa-B activation and the transcription of genes involved in cell survival. Through SHC1 and SH2B1 controls a Ras-PI3 kinase-AKT1 signaling cascade that is also regulating survival. In absence of ligand and activation, may promote cell death, making the survival of neurons dependent on trophic factors. The polypeptide is High affinity nerve growth factor receptor (Ntrk1) (Mus musculus (Mouse)).